Consider the following 891-residue polypeptide: Alanine--tRNA ligase (891 aa).

Zn(2+) is bound by residues H574, H578, C676, and H680.

It belongs to the class-II aminoacyl-tRNA synthetase family. The cofactor is Zn(2+).

It is found in the cytoplasm. The enzyme catalyses tRNA(Ala) + L-alanine + ATP = L-alanyl-tRNA(Ala) + AMP + diphosphate. Functionally, catalyzes the attachment of alanine to tRNA(Ala) in a two-step reaction: alanine is first activated by ATP to form Ala-AMP and then transferred to the acceptor end of tRNA(Ala). Also edits incorrectly charged Ser-tRNA(Ala) and Gly-tRNA(Ala) via its editing domain. The protein is Alanine--tRNA ligase of Synechococcus sp. (strain WH7803).